Here is a 167-residue protein sequence, read N- to C-terminus: SsrA-binding protein (167 aa).

Over residues 139 to 158 (QNHDKRDAAKERDWQRDKQR) the composition is skewed to basic and acidic residues. The interval 139 to 167 (QNHDKRDAAKERDWQRDKQRVMRRHNRDA) is disordered.

This sequence belongs to the SmpB family.

The protein localises to the cytoplasm. In terms of biological role, required for rescue of stalled ribosomes mediated by trans-translation. Binds to transfer-messenger RNA (tmRNA), required for stable association of tmRNA with ribosomes. tmRNA and SmpB together mimic tRNA shape, replacing the anticodon stem-loop with SmpB. tmRNA is encoded by the ssrA gene; the 2 termini fold to resemble tRNA(Ala) and it encodes a 'tag peptide', a short internal open reading frame. During trans-translation Ala-aminoacylated tmRNA acts like a tRNA, entering the A-site of stalled ribosomes, displacing the stalled mRNA. The ribosome then switches to translate the ORF on the tmRNA; the nascent peptide is terminated with the 'tag peptide' encoded by the tmRNA and targeted for degradation. The ribosome is freed to recommence translation, which seems to be the essential function of trans-translation. This Xanthomonas oryzae pv. oryzae (strain MAFF 311018) protein is SsrA-binding protein.